Consider the following 592-residue polypeptide: Methionine--tRNA ligase (592 aa).

The 'HIGH' region signature appears at 12–22 (PYANGPFHVGH). C144, C147, C157, and C160 together coordinate Zn(2+). Positions 342–346 (KMSTS) match the 'KMSKS' region motif. T345 provides a ligand contact to ATP.

The protein belongs to the class-I aminoacyl-tRNA synthetase family. MetG type 1 subfamily. In terms of assembly, monomer. Requires Zn(2+) as cofactor.

It is found in the cytoplasm. The catalysed reaction is tRNA(Met) + L-methionine + ATP = L-methionyl-tRNA(Met) + AMP + diphosphate. Its function is as follows. Is required not only for elongation of protein synthesis but also for the initiation of all mRNA translation through initiator tRNA(fMet) aminoacylation. The protein is Methionine--tRNA ligase of Roseiflexus sp. (strain RS-1).